Reading from the N-terminus, the 417-residue chain is Serine hydroxymethyltransferase (417 aa).

Residues L121 and 125-127 (GHL) each bind (6S)-5,6,7,8-tetrahydrofolate. K229 bears the N6-(pyridoxal phosphate)lysine mark. 355-357 (SPF) contacts (6S)-5,6,7,8-tetrahydrofolate.

This sequence belongs to the SHMT family. Homodimer. It depends on pyridoxal 5'-phosphate as a cofactor.

The protein resides in the cytoplasm. It catalyses the reaction (6R)-5,10-methylene-5,6,7,8-tetrahydrofolate + glycine + H2O = (6S)-5,6,7,8-tetrahydrofolate + L-serine. Its pathway is one-carbon metabolism; tetrahydrofolate interconversion. It functions in the pathway amino-acid biosynthesis; glycine biosynthesis; glycine from L-serine: step 1/1. Its function is as follows. Catalyzes the reversible interconversion of serine and glycine with tetrahydrofolate (THF) serving as the one-carbon carrier. This reaction serves as the major source of one-carbon groups required for the biosynthesis of purines, thymidylate, methionine, and other important biomolecules. Also exhibits THF-independent aldolase activity toward beta-hydroxyamino acids, producing glycine and aldehydes, via a retro-aldol mechanism. The polypeptide is Serine hydroxymethyltransferase (Buchnera aphidicola subsp. Acyrthosiphon pisum (strain 5A)).